The following is a 1039-amino-acid chain: Probable inorganic carbon transporter subunit DabA 1 (1039 aa).

Zn(2+) contacts are provided by C462, D464, H721, and C736.

It belongs to the inorganic carbon transporter (TC 9.A.2) DabA family. Forms a complex with DabB. Requires Zn(2+) as cofactor.

It is found in the cell inner membrane. Functionally, part of an energy-coupled inorganic carbon pump. The chain is Probable inorganic carbon transporter subunit DabA 1 from Nitrobacter hamburgensis (strain DSM 10229 / NCIMB 13809 / X14).